Here is a 601-residue protein sequence, read N- to C-terminus: uncharacterized protein (601 aa).

Residues 127 to 364 form a disordered region; that stretch reads SSLFSSGSPP…PAFANDDTVH (238 aa). The segment covering 128–137 has biased composition (polar residues); that stretch reads SLFSSGSPPD. The segment covering 141–154 has biased composition (low complexity); that stretch reads RNSTSNLSSVSTNS. 3 stretches are compositionally biased toward polar residues: residues 159–177, 199–213, and 232–250; these read TIGS…ASQR, ALSS…NVTP, and SATN…SPSQ. A phosphoserine mark is found at Ser-247 and Ser-281. Residues 265 to 281 are compositionally biased toward low complexity; sequence SLSSSPSSEDSDLSLSS. 2 stretches are compositionally biased toward basic and acidic residues: residues 286–296 and 313–325; these read DEKKQPSKSEK and GSKE…KEKA. A Phosphoserine modification is found at Ser-335. The segment covering 338–356 has biased composition (polar residues); it reads DTSTEYDSNSLRRSRSNPA.

This is an uncharacterized protein from Schizosaccharomyces pombe (strain 972 / ATCC 24843) (Fission yeast).